We begin with the raw amino-acid sequence, 120 residues long: uncharacterized protein (120 aa).

The region spanning 3 to 120 (IRYKKAFEKI…EKCEICHGSE (118 aa)) is the N-acetyltransferase domain.

This is an uncharacterized protein from Bacillus methanolicus.